A 102-amino-acid chain; its full sequence is Ferredoxin (102 aa).

4Fe-4S ferredoxin-type domains lie at 45-73 (VSVN…ELVE) and 74-102 (TWIE…EVMK). [4Fe-4S] cluster is bound by residues Cys54, Cys57, Cys60, Cys64, Cys83, Cys86, Cys89, and Cys93.

Requires [4Fe-4S] cluster as cofactor.

It functions in the pathway membrane lipid metabolism; glycerophospholipid metabolism. In terms of biological role, ferredoxin that is the specific electron donor for the geranylgeranyl reductase GGR involved in the biosynthesis of archaeal membrane lipids. This is Ferredoxin from Methanosarcina acetivorans (strain ATCC 35395 / DSM 2834 / JCM 12185 / C2A).